A 122-amino-acid chain; its full sequence is Large ribosomal subunit protein uL14 (122 aa).

This sequence belongs to the universal ribosomal protein uL14 family. Part of the 50S ribosomal subunit. Forms a cluster with proteins L3 and L19. In the 70S ribosome, L14 and L19 interact and together make contacts with the 16S rRNA in bridges B5 and B8.

Functionally, binds to 23S rRNA. Forms part of two intersubunit bridges in the 70S ribosome. The polypeptide is Large ribosomal subunit protein uL14 (Paraburkholderia phymatum (strain DSM 17167 / CIP 108236 / LMG 21445 / STM815) (Burkholderia phymatum)).